We begin with the raw amino-acid sequence, 678 residues long: Macrolide export ATP-binding/permease protein MacB 1 (678 aa).

Residues Leu11 to Ile249 form the ABC transporter domain. Gly47–Ser54 serves as a coordination point for ATP. A run of 4 helical transmembrane segments spans residues Ala303–Gly323, Ile558–Val578, Leu608–Phe628, and Ala641–Phe661.

Belongs to the ABC transporter superfamily. Macrolide exporter (TC 3.A.1.122) family. As to quaternary structure, homodimer. Part of the tripartite efflux system MacAB-TolC, which is composed of an inner membrane transporter, MacB, a periplasmic membrane fusion protein, MacA, and an outer membrane component, TolC. The complex forms a large protein conduit and can translocate molecules across both the inner and outer membranes. Interacts with MacA.

The protein localises to the cell inner membrane. Functionally, part of the tripartite efflux system MacAB-TolC. MacB is a non-canonical ABC transporter that contains transmembrane domains (TMD), which form a pore in the inner membrane, and an ATP-binding domain (NBD), which is responsible for energy generation. Confers resistance against macrolides. This chain is Macrolide export ATP-binding/permease protein MacB 1, found in Yersinia pestis bv. Antiqua (strain Nepal516).